The following is a 452-amino-acid chain: CASP-like protein 4A1 (452 aa).

Basic and acidic residues predominate over residues 1-17 (MGLRDSLKEREDRRSSE). Disordered regions lie at residues 1-39 (MGLR…RKES), 71-147 (RAGP…ARSS), and 164-283 (AKYV…VQFR). The Cytoplasmic segment spans residues 1 to 305 (MGLRDSLKER…KRRAAAMQRT (305 aa)). The span at 25–34 (SWMTRESTTG) shows a compositional bias: polar residues. Low complexity-rich tracts occupy residues 105-126 (QAQA…TGSG) and 190-205 (GWYS…AAPP). Over residues 211 to 272 (DPPPAPPRRQ…TAPAPAPVPA (62 aa)) the composition is skewed to pro residues. A helical transmembrane segment spans residues 306–326 (ALLARGAAAGLCLAALAVLAA). Topologically, residues 327–347 (DTRKGWARDSYSNYTQFRYSE) are extracellular. An N-linked (GlcNAc...) asparagine glycan is attached at Asn-339. The chain crosses the membrane as a helical span at residues 348–368 (AVNVIGFIYSVFQFVALVELM). Over 369-389 (RRNKHLIPHPKRDLFDFTMDQ) the chain is Cytoplasmic. The chain crosses the membrane as a helical span at residues 390–406 (VLTYLLISSSSSATARV). Residues 407–423 (SDLIDNWGSDPFPSMAN) are Extracellular-facing. Residue Asn-423 is glycosylated (N-linked (GlcNAc...) asparagine). Residues 424 to 444 (GSIAISFLAFAVFAICSLISA) traverse the membrane as a helical segment. At 445-452 (YNLFRRDV) the chain is on the cytoplasmic side.

This sequence belongs to the Casparian strip membrane proteins (CASP) family. In terms of assembly, homodimer and heterodimers.

It localises to the cell membrane. This Sorghum bicolor (Sorghum) protein is CASP-like protein 4A1.